Consider the following 732-residue polypeptide: Segment polarity protein dishevelled homolog DVL-2 (732 aa).

The 82-residue stretch at M1–E82 folds into the DIX domain. Disordered stretches follow at residues S81–T181 and E195–S237. Residues D98–A111 are compositionally biased toward pro residues. Over residues M146–T157 the composition is skewed to basic and acidic residues. Residues R202–S213 show a composition bias toward polar residues. Over residues L215 to P227 the composition is skewed to basic residues. Positions T250–A335 constitute a PDZ domain. Residues P424 to D498 enclose the DEP domain. Low complexity-rich tracts occupy residues M570 to S589, K612 to R629, and P637 to P647. Positions M570–A660 are disordered.

This sequence belongs to the DSH family. As to quaternary structure, can form homomultimers. Interacts with prickle1. Interacts (via the PDZ domain) with ccdc88c/dal and dact1-B/dpr. Interacts (via the DIX domain) with ARP/Axin-related protein and dact1-A/frodo. Interacts with sdc4, possibly via fz7. Interacts directly (via the DEP domain) with efnb1/ephrin-B1. May interact indirectly with the phosphorylated ephrin receptors ephb1 and ephb2 via SH domain-containing adapters. In terms of processing, phosphorylated. Phosphorylation is controlled by frizzled proteins, correlates with the onset of embryo dorsalizing events and is higher in the dorsal half of early cleavage embryos. Phosphorylated on tyrosine residues in response to association with efnb1/ephrin-B1.

The protein localises to the cytoplasm. Its subcellular location is the cytoplasmic vesicle. It localises to the cell projection. It is found in the cilium. The protein resides in the nucleus. The protein localises to the cell membrane. Involved in at least 2 independent signaling cascades, controlling cell fate via canonical Wnt signaling and cell polarity via a planar cell polarity (PCP) cascade. Acts synergistically with dal/dapple-like to activate Wnt signaling, stabilizing ctnnb1/beta-catenin and leading to dorsal axis formation. Also prevents degradation of ctnnb1/beta-catenin by displacing gsk3 from a complex with ARP/Axin-related protein. Has an additional role in anterior-posterior (A/P) axis formation, specifying different neuroectodermal cell fates along the A/P axis in a dose-dependent manner by activating several early patterning genes. In the PCP pathway, required at the cell membrane for PCP-mediated neural and mesodermal convergent extension during gastrulation and subsequent neural tube closure, acting to activate jnk. Also involved in blastopore closure and archenteron elongation during early, but not late, gastrulation. Associates with ephrin receptors and ligands and acts as part of a downstream PCP pathway to mediate ephrin-mediated cell repulsion via activation of rhoa. Required for efnb1/ephrin-B1-driven movement of non-retinal progenitor cells into the retina during eye field formation. Patterns the hindbrain. Required for ciliogenesis. Controls the docking of basal bodies to the apical plasma membrane; mediates the activation, but not localization of rhoa at the apical surface of ciliated cells during basal body docking. Furthermore, required for the association of basal bodies with membrane-bound vesicles and the vesicle-trafficking protein exoc4/sec8, and this association is in turn required for basal body docking. Once basal bodies are docked, required for the planar polarization of basal bodies that underlies ciliary beating and the directional fluid flow across ciliated epithelia. The protein is Segment polarity protein dishevelled homolog DVL-2 of Xenopus tropicalis (Western clawed frog).